The following is a 217-amino-acid chain: uncharacterized protein (217 aa).

The next 2 membrane-spanning stretches (helical) occupy residues 151 to 171 and 177 to 197; these read LIPFINFFLLYHQIILSHSLF and ISFHFLFFSFLSFPLLSFILF.

The protein resides in the mitochondrion membrane. This is an uncharacterized protein from Schizosaccharomyces pombe (strain 972 / ATCC 24843) (Fission yeast).